Here is a 513-residue protein sequence, read N- to C-terminus: Solute carrier family 2, facilitated glucose transporter member 10 (513 aa).

Residues 1 to 6 (MGCSVL) lie on the Cytoplasmic side of the membrane. The chain crosses the membrane as a helical span at residues 7 to 27 (LLTITVSTLGGLVFGYELGII). Residues 28 to 46 (SGALPQLQTHFSLGCVQQE) are Extracellular-facing. The helical transmembrane segment at 47–67 (AVVSALLIGSLFASIIGGWLI) threads the bilayer. Over 68 to 80 (DRHGRRTSILLSN) the chain is Cytoplasmic. A helical membrane pass occupies residues 81-101 (LLILAGSVILTTGTSFFALVI). Residues 102 to 104 (GRA) lie on the Extracellular side of the membrane. The chain crosses the membrane as a helical span at residues 105–125 (VIGFAMTVSSMSCCIFVSEMV). Over 126–130 (TPERR) the chain is Cytoplasmic. Residues 131 to 151 (GLMVTLYEVGITVGILIAYAV) traverse the membrane as a helical segment. Topologically, residues 152 to 164 (NYIFNNVPLTGWR) are extracellular. Residues 165–185 (YMFGFAIIPSLIQLASIVLLP) traverse the membrane as a helical segment. At 186 to 236 (KQAEVFVIHDDDSRQADRLTEETETSNQHQQSEKYGVSDLFKSKDNMRRRT) the chain is on the cytoplasmic side. Residues 237-257 (VIGVGLVLSQQFTGQPNVLFY) traverse the membrane as a helical segment. 246 to 247 (QQ) lines the D-glucose pocket. Topologically, residues 258–272 (ASTILFSVGFQSNAS) are extracellular. Asn-270 carries N-linked (GlcNAc...) asparagine glycosylation. The helical transmembrane segment at 273-293 (AILASVGFGIVKVIATLLAML) threads the bilayer. The Cytoplasmic portion of the chain corresponds to 294–301 (CSDRAGRR). A helical membrane pass occupies residues 302 to 322 (SLLIGGCSMLAVGLILTGFLC). At 323-376 (RQSVIDTTKRCTSVGPHSNLTLSAEHDEGVGFSSQTLDVHEHLRSFSQSEDIYK) the chain is on the extracellular side. N-linked (GlcNAc...) asparagine glycosylation is present at Asn-341. Residues 377-397 (WIIFTCLMAVVSAFSVSFGPM) traverse the membrane as a helical segment. Residues 398–422 (TWVVLSEIFPKDIRGRAFSFINCFN) are Cytoplasmic-facing. A D-glucose-binding site is contributed by Trp-399. The next 2 membrane-spanning stretches (helical) occupy residues 423–443 (VGANLIVSFSFLSIIDVIGLS) and 444–464 (GVFLMYGVVGIAGVVFIYLVL). Residues 465–513 (PETKGKSLQDIDRELSQTRMIHRQELCSIFQRRRFSPGYQRVQLTSTAT) lie on the Cytoplasmic side of the membrane.

The protein belongs to the major facilitator superfamily. Sugar transporter (TC 2.A.1.1) family. Glucose transporter subfamily.

It localises to the endomembrane system. Its subcellular location is the cytoplasm. The protein resides in the perinuclear region. It catalyses the reaction D-glucose(out) = D-glucose(in). Its function is as follows. Facilitative glucose transporter required for the development of the cardiovascular system. The chain is Solute carrier family 2, facilitated glucose transporter member 10 from Danio rerio (Zebrafish).